The chain runs to 366 residues: ATP-dependent 6-phosphofructokinase (366 aa).

Residues glycine 16, 78 to 79 (RE), and 118 to 121 (GNGT) contribute to the ATP site. Residues 74-94 (LGTSREKPFKPDPGEKDSEAG) form a disordered region. Residues 77–94 (SREKPFKPDPGEKDSEAG) are compositionally biased toward basic and acidic residues. Asparagine 119 contacts Mg(2+). Substrate-binding positions include 141–143 (TID), arginine 178, 185–187 (MGH), glutamate 238, arginine 282, and 288–291 (YLQR). Aspartate 143 (proton acceptor) is an active-site residue.

This sequence belongs to the phosphofructokinase type A (PFKA) family. Mixed-substrate PFK group III subfamily. In terms of assembly, homodimer or homotetramer. Mg(2+) is required as a cofactor.

Its subcellular location is the cytoplasm. The enzyme catalyses beta-D-fructose 6-phosphate + ATP = beta-D-fructose 1,6-bisphosphate + ADP + H(+). It participates in carbohydrate degradation; glycolysis; D-glyceraldehyde 3-phosphate and glycerone phosphate from D-glucose: step 3/4. In terms of biological role, catalyzes the phosphorylation of D-fructose 6-phosphate to fructose 1,6-bisphosphate by ATP, the first committing step of glycolysis. The sequence is that of ATP-dependent 6-phosphofructokinase from Spirochaeta thermophila (strain ATCC 49972 / DSM 6192 / RI 19.B1).